A 326-amino-acid chain; its full sequence is Pyruvate dehydrogenase E1 component subunit beta (326 aa).

E59 is a thiamine diphosphate binding site.

As to quaternary structure, heterodimer of an alpha and a beta chain. It depends on thiamine diphosphate as a cofactor.

The catalysed reaction is N(6)-[(R)-lipoyl]-L-lysyl-[protein] + pyruvate + H(+) = N(6)-[(R)-S(8)-acetyldihydrolipoyl]-L-lysyl-[protein] + CO2. The pyruvate dehydrogenase complex catalyzes the overall conversion of pyruvate to acetyl-CoA and CO(2). It contains multiple copies of three enzymatic components: pyruvate dehydrogenase (E1), dihydrolipoamide acetyltransferase (E2) and lipoamide dehydrogenase (E3). This is Pyruvate dehydrogenase E1 component subunit beta (pdhB) from Rickettsia conorii (strain ATCC VR-613 / Malish 7).